A 210-amino-acid polypeptide reads, in one-letter code: Protein-methionine-sulfoxide reductase heme-binding subunit MsrQ (210 aa).

4 consecutive transmembrane segments (helical) span residues 15–35 (DTLVYGLVWLACFAPLAWLAW), 89–109 (LFAFAYVALHLLAYVGIDLFF), 122–142 (PFITLGMLGFMLLIPLAVTST), and 160–180 (LVYLIVPLGVAHYYLLVKADH).

The protein belongs to the MsrQ family. As to quaternary structure, heterodimer of a catalytic subunit (MsrP) and a heme-binding subunit (MsrQ). It depends on FMN as a cofactor. Requires heme b as cofactor.

Its subcellular location is the cell inner membrane. Functionally, part of the MsrPQ system that repairs oxidized periplasmic proteins containing methionine sulfoxide residues (Met-O), using respiratory chain electrons. Thus protects these proteins from oxidative-stress damage caused by reactive species of oxygen and chlorine generated by the host defense mechanisms. MsrPQ is essential for the maintenance of envelope integrity under bleach stress, rescuing a wide series of structurally unrelated periplasmic proteins from methionine oxidation. MsrQ provides electrons for reduction to the reductase catalytic subunit MsrP, using the quinone pool of the respiratory chain. This Caulobacter vibrioides (strain ATCC 19089 / CIP 103742 / CB 15) (Caulobacter crescentus) protein is Protein-methionine-sulfoxide reductase heme-binding subunit MsrQ.